The following is a 922-amino-acid chain: GPI inositol-deacylase (922 aa).

Residues Met-1–Leu-11 lie on the Cytoplasmic side of the membrane. A helical membrane pass occupies residues Ala-12–Phe-32. The Lumenal segment spans residues Glu-33–Ala-597. The active site involves Ser-174. Asn-363, Asn-402, and Asn-558 each carry an N-linked (GlcNAc...) asparagine glycan. Residues Leu-598–Leu-618 form a helical membrane-spanning segment. The Cytoplasmic portion of the chain corresponds to Ser-619–Pro-641. Residues Phe-642–Val-662 traverse the membrane as a helical segment. Residues Leu-663–Asp-668 lie on the Lumenal side of the membrane. The chain crosses the membrane as a helical span at residues Ala-669–Phe-689. The Cytoplasmic portion of the chain corresponds to Gly-690 to Ala-694. The chain crosses the membrane as a helical span at residues Tyr-695–Leu-715. The Lumenal portion of the chain corresponds to Lys-716–Pro-733. A helical transmembrane segment spans residues Val-734–Leu-754. The Cytoplasmic portion of the chain corresponds to Ser-755–Ser-817. Residues Asn-776 to Ala-798 are disordered. The span at Lys-782–His-793 shows a compositional bias: basic residues. The chain crosses the membrane as a helical span at residues Thr-818–Leu-838. Residues Lys-839–Val-894 lie on the Lumenal side of the membrane. The chain crosses the membrane as a helical span at residues Ile-895–Phe-915. At His-916–Met-922 the chain is on the cytoplasmic side.

This sequence belongs to the GPI inositol-deacylase family.

Its subcellular location is the endoplasmic reticulum membrane. Its function is as follows. GPI inositol-deacylase that catalyzes the remove of the acyl chain linked to the 2-OH position of inositol ring from the GPI-anchored protein (GPI-AP) in the endoplasmic reticulum. Initiates the post-attachment remodeling phase of GPI-AP biogenesis and participates in endoplasmic reticulum (ER)-to-Golgi transport of GPI-anchored protein. The chain is GPI inositol-deacylase from Mus musculus (Mouse).